A 422-amino-acid chain; its full sequence is Lactoyl-CoA dehydratase subunit alpha (422 aa).

This sequence belongs to the FldB/FldC dehydratase alpha/beta subunit family. As to quaternary structure, heterodimer of an alpha (LcdA) and a beta (LcdB) subunit. The cofactor is [4Fe-4S] cluster. FMN serves as cofactor. Riboflavin is required as a cofactor. Requires Mg(2+) as cofactor.

The catalysed reaction is (R)-lactoyl-CoA = acryloyl-CoA + H2O. It carries out the reaction (2R)-hydroxybutanoyl-CoA = (2E)-butenoyl-CoA + H2O. With respect to regulation, activated by the LcdC protein. Involved in the acrylate pathway for the conversion of D-lactic acid to propionic acid. Catalyzes the reversible dehydration of Lactoyl-CoA and 2-hydroxybutyroyl-CoA to acryloyl-CoA and crotonyl-CoA, respectively. The chain is Lactoyl-CoA dehydratase subunit alpha (lcdA) from Anaerotignum propionicum (Clostridium propionicum).